The primary structure comprises 119 residues: MRHRKSGVKLGRTGSHRKAMFQNMTNSLFEHELIKTTLPKAKELRRVAEPLITLAKEDSVANRRLAFSRMRNKNMVGKLFGTLAPRYQARPGGYIRIIKCGNRDGDNAPMAYVELVDRD.

The protein belongs to the bacterial ribosomal protein bL17 family. As to quaternary structure, part of the 50S ribosomal subunit. Contacts protein L32.

The protein is Large ribosomal subunit protein bL17 of Psychrobacter sp. (strain PRwf-1).